The following is a 295-amino-acid chain: MYTSVLLNVESTILDFWRLLKPRIMYLVVFTAVAGMVTAPGSMHPFLALISLICVALGSGSAGAINMWYDRDIDLLMERTKNRPIPSGRVSAESALEFGITLGILSVFIMAIAVNYISAALLAVSILFYVFIYTIWLKRRTPQNIVIGGAAGAFPPMIGWAAVTNSVSWESFILFLVIFMWTPPHFWALSLNKSEDYAKASIPMSNIVYGPEKTRKYILIYSVLLVLTSLLPALFLKKALLYLSMATFEGCVFIWYAVSVMKFKNHSSQKKMFSYSISYLFSLFASIIFCSIDLF.

The next 9 helical transmembrane spans lie at 24–44, 45–65, 94–114, 117–137, 144–164, 171–191, 216–236, 240–260, and 272–292; these read IMYL…GSMH, PFLA…AGAI, SALE…AIAV, ISAA…TIWL, NIVI…AAVT, SFIL…ALSL, KYIL…ALFL, LLYL…AVSV, and MFSY…FCSI.

Belongs to the UbiA prenyltransferase family. Protoheme IX farnesyltransferase subfamily.

The protein resides in the cell membrane. It catalyses the reaction heme b + (2E,6E)-farnesyl diphosphate + H2O = Fe(II)-heme o + diphosphate. Its pathway is porphyrin-containing compound metabolism; heme O biosynthesis; heme O from protoheme: step 1/1. Converts heme B (protoheme IX) to heme O by substitution of the vinyl group on carbon 2 of heme B porphyrin ring with a hydroxyethyl farnesyl side group. The protein is Protoheme IX farnesyltransferase of Wolbachia pipientis wMel.